A 164-amino-acid chain; its full sequence is Ribosome-binding factor A (164 aa).

The protein belongs to the RbfA family. Monomer. Binds 30S ribosomal subunits, but not 50S ribosomal subunits or 70S ribosomes.

The protein localises to the cytoplasm. Its function is as follows. One of several proteins that assist in the late maturation steps of the functional core of the 30S ribosomal subunit. Associates with free 30S ribosomal subunits (but not with 30S subunits that are part of 70S ribosomes or polysomes). Required for efficient processing of 16S rRNA. May interact with the 5'-terminal helix region of 16S rRNA. This Caulobacter sp. (strain K31) protein is Ribosome-binding factor A.